A 592-amino-acid polypeptide reads, in one-letter code: Threonine dehydratase biosynthetic, chloroplastic (592 aa).

A chloroplast-targeting transit peptide spans 1–91 (MNSVQLPTAQ…NEAENGSIAE (91 aa)). The residue at position 141 (Lys141) is an N6-(pyridoxal phosphate)lysine. 2 ACT-like domains span residues 419–490 (AVLA…NLTT) and 512–583 (VLCR…LVSD).

This sequence belongs to the serine/threonine dehydratase family. Requires pyridoxal 5'-phosphate as cofactor.

It localises to the plastid. The protein localises to the chloroplast. The enzyme catalyses L-threonine = 2-oxobutanoate + NH4(+). Its pathway is amino-acid biosynthesis; L-isoleucine biosynthesis; 2-oxobutanoate from L-threonine: step 1/1. With respect to regulation, allosterically inhibited by isoleucine. Strain GM11b is isoleucine feedback insensitive and is resistant to the antimetabolite L-O-methylthreonine. Its function is as follows. Catalyzes the formation of alpha-ketobutyrate from threonine in a two-step reaction. The first step is a dehydration of threonine, followed by rehydration and liberation of ammonia. This chain is Threonine dehydratase biosynthetic, chloroplastic (OMR1), found in Arabidopsis thaliana (Mouse-ear cress).